A 141-amino-acid chain; its full sequence is Small ribosomal subunit protein uS12 (141 aa).

A 3-methylthioaspartic acid modification is found at aspartate 89. The disordered stretch occupies residues 104–141 (ASGAVGPSNTNKLNRNVSRSKYGVKRPKAGAKPASKAK). Residues 110-122 (PSNTNKLNRNVSR) show a composition bias toward polar residues. Positions 125–141 (YGVKRPKAGAKPASKAK) are enriched in basic residues.

Belongs to the universal ribosomal protein uS12 family. As to quaternary structure, part of the 30S ribosomal subunit. Contacts proteins S8 and S17. May interact with IF1 in the 30S initiation complex.

Its function is as follows. With S4 and S5 plays an important role in translational accuracy. Interacts with and stabilizes bases of the 16S rRNA that are involved in tRNA selection in the A site and with the mRNA backbone. Located at the interface of the 30S and 50S subunits, it traverses the body of the 30S subunit contacting proteins on the other side and probably holding the rRNA structure together. The combined cluster of proteins S8, S12 and S17 appears to hold together the shoulder and platform of the 30S subunit. The sequence is that of Small ribosomal subunit protein uS12 from Methylacidiphilum infernorum (isolate V4) (Methylokorus infernorum (strain V4)).